The primary structure comprises 293 residues: ATP phosphoribosyltransferase (293 aa).

It belongs to the ATP phosphoribosyltransferase family. Long subfamily. Requires Mg(2+) as cofactor.

The protein resides in the cytoplasm. The enzyme catalyses 1-(5-phospho-beta-D-ribosyl)-ATP + diphosphate = 5-phospho-alpha-D-ribose 1-diphosphate + ATP. It participates in amino-acid biosynthesis; L-histidine biosynthesis; L-histidine from 5-phospho-alpha-D-ribose 1-diphosphate: step 1/9. Feedback inhibited by histidine. Its function is as follows. Catalyzes the condensation of ATP and 5-phosphoribose 1-diphosphate to form N'-(5'-phosphoribosyl)-ATP (PR-ATP). Has a crucial role in the pathway because the rate of histidine biosynthesis seems to be controlled primarily by regulation of HisG enzymatic activity. This chain is ATP phosphoribosyltransferase, found in Solidesulfovibrio magneticus (strain ATCC 700980 / DSM 13731 / RS-1) (Desulfovibrio magneticus).